Consider the following 462-residue polypeptide: Argininosuccinate lyase (462 aa).

It belongs to the lyase 1 family. Argininosuccinate lyase subfamily.

It localises to the cytoplasm. The catalysed reaction is 2-(N(omega)-L-arginino)succinate = fumarate + L-arginine. It functions in the pathway amino-acid biosynthesis; L-arginine biosynthesis; L-arginine from L-ornithine and carbamoyl phosphate: step 3/3. This chain is Argininosuccinate lyase, found in Caldicellulosiruptor saccharolyticus (strain ATCC 43494 / DSM 8903 / Tp8T 6331).